The sequence spans 122 residues: Large ribosomal subunit protein uL14 (122 aa).

Belongs to the universal ribosomal protein uL14 family. Part of the 50S ribosomal subunit. Forms a cluster with proteins L3 and L19. In the 70S ribosome, L14 and L19 interact and together make contacts with the 16S rRNA in bridges B5 and B8.

Functionally, binds to 23S rRNA. Forms part of two intersubunit bridges in the 70S ribosome. The protein is Large ribosomal subunit protein uL14 of Mycobacteroides abscessus (strain ATCC 19977 / DSM 44196 / CCUG 20993 / CIP 104536 / JCM 13569 / NCTC 13031 / TMC 1543 / L948) (Mycobacterium abscessus).